The following is a 516-amino-acid chain: Adenine DNA glycosylase (516 aa).

Residues 1-23 are compositionally biased toward basic residues; it reads MKKLRASVRSHKKQPANHKRRGK. The disordered stretch occupies residues 1–38; it reads MKKLRASVRSHKKQPANHKRRGKCALSSSQAKPSGLDG. E105 functions as the Proton donor/acceptor in the catalytic mechanism. 4 residues coordinate [4Fe-4S] cluster: C261, C268, C271, and C277. The Nudix hydrolase domain occupies 335–467; it reads PREEYSATCV…AMKKVFRVYE (133 aa). The Nudix box motif lies at 376–398; the sequence is VTLEPSGQHQHKALLQELQHWSA. The interval 474–516 is disordered; sequence CKGSKRPQVCTPSSRKKPSRGQQVLDRFFQRHIPTHKPNSTTQ.

The protein belongs to the Nth/MutY family. The cofactor is [4Fe-4S] cluster. Expressed in brain, spleen, heart, liver and kidney.

The protein localises to the nucleus. Its subcellular location is the mitochondrion. The catalysed reaction is Hydrolyzes free adenine bases from 7,8-dihydro-8-oxoguanine:adenine mismatched double-stranded DNA, leaving an apurinic site.. Functionally, involved in oxidative DNA damage repair. Initiates repair of A*oxoG to C*G by removing the inappropriately paired adenine base from the DNA backbone. Possesses both adenine and 2-OH-A DNA glycosylase activities. This is Adenine DNA glycosylase (Mutyh) from Rattus norvegicus (Rat).